The chain runs to 471 residues: Probable nucleoredoxin 3 (471 aa).

Thioredoxin domains are found at residues 15–173 (VSIP…ARRQ) and 179–334 (QLLG…KERD).

It belongs to the nucleoredoxin family.

The catalysed reaction is [protein]-dithiol + NAD(+) = [protein]-disulfide + NADH + H(+). It carries out the reaction [protein]-dithiol + NADP(+) = [protein]-disulfide + NADPH + H(+). Functionally, probable thiol-disulfide oxidoreductase that may participate in various redox reactions. In Oryza sativa subsp. japonica (Rice), this protein is Probable nucleoredoxin 3.